A 141-amino-acid chain; its full sequence is 4-hydroxybenzoyl-CoA thioesterase (141 aa).

Aspartate 17 is a catalytic residue. Substrate is bound by residues tryptophan 47, 59–61 (TPI), and lysine 90.

Belongs to the 4-hydroxybenzoyl-CoA thioesterase family. As to quaternary structure, homotetramer.

It carries out the reaction 4-hydroxybenzoyl-CoA + H2O = 4-hydroxybenzoate + CoA + H(+). Its pathway is xenobiotic degradation; 4-chlorobenzoate degradation; 4-hydroxybenzoate from 4-chlorobenzoate: step 3/3. Its activity is regulated as follows. Unaffected by EDTA, Mg(2+), Mn(2+), Fe(2+), Ca(2+), Co(2+) and Zn(2+). Its function is as follows. Hydrolyzes 4-hydroxybenzoate-CoA, and to a lesser extent benzoyl-CoA and 4-chlorobenzoate-CoA. Not active against aliphatic acyl-CoA thioesters, including palmitoyl-CoA, hexanoyl-CoA and acetyl-CoA. This chain is 4-hydroxybenzoyl-CoA thioesterase, found in Pseudomonas sp. (strain CBS-3).